We begin with the raw amino-acid sequence, 171 residues long: Co-chaperone protein HscB (171 aa).

The J domain maps to 2-74 (DYFTLFGLPA…LTRAEYLLSL (73 aa)).

The protein belongs to the HscB family. Interacts with HscA and stimulates its ATPase activity. Interacts with IscU.

Co-chaperone involved in the maturation of iron-sulfur cluster-containing proteins. Seems to help targeting proteins to be folded toward HscA. The sequence is that of Co-chaperone protein HscB from Salmonella choleraesuis (strain SC-B67).